A 233-amino-acid chain; its full sequence is Small ribosomal subunit protein uS2 (233 aa).

The protein belongs to the universal ribosomal protein uS2 family.

The sequence is that of Small ribosomal subunit protein uS2 from Clostridium botulinum (strain Eklund 17B / Type B).